Consider the following 231-residue polypeptide: Probable caffeoyl-CoA O-methyltransferase 2 (231 aa).

Residues Thr53, Asp75, 77–78 (GV), Ser83, Asp101, Ala130, Asp152, Asp154, and Tyr161 contribute to the S-adenosyl-L-methionine site. Asp152 provides a ligand contact to a divalent metal cation. Positions 178 and 179 each coordinate a divalent metal cation.

This sequence belongs to the class I-like SAM-binding methyltransferase superfamily. Cation-dependent O-methyltransferase family. CCoAMT subfamily.

The enzyme catalyses (E)-caffeoyl-CoA + S-adenosyl-L-methionine = (E)-feruloyl-CoA + S-adenosyl-L-homocysteine + H(+). This Dictyostelium discoideum (Social amoeba) protein is Probable caffeoyl-CoA O-methyltransferase 2 (omt6).